The primary structure comprises 92 residues: Small ribosomal subunit protein bS18 (92 aa).

Residues 1-27 (MTQQSNSADRKPRGKGPKRPRKPKVDP) form a disordered region. Basic residues predominate over residues 12-22 (PRGKGPKRPRK).

It belongs to the bacterial ribosomal protein bS18 family. As to quaternary structure, part of the 30S ribosomal subunit. Forms a tight heterodimer with protein bS6.

In terms of biological role, binds as a heterodimer with protein bS6 to the central domain of the 16S rRNA, where it helps stabilize the platform of the 30S subunit. This Deinococcus deserti (strain DSM 17065 / CIP 109153 / LMG 22923 / VCD115) protein is Small ribosomal subunit protein bS18.